The chain runs to 132 residues: Protein NrdI (132 aa).

Belongs to the NrdI family.

Its function is as follows. Probably involved in ribonucleotide reductase function. This is Protein NrdI from Bartonella tribocorum (strain CIP 105476 / IBS 506).